The sequence spans 107 residues: Essential MCU regulator, mitochondrial (107 aa).

A mitochondrion-targeting transit peptide spans 1 to 47; that stretch reads MASTAARRLAWVAVRPGALWSGPRGRRGGDVYTVPGSSGLSQVPSRS. The Mitochondrial matrix segment spans residues 48-65; the sequence is VIVTRSGAILPKPVKMSF. The helical transmembrane segment at 66 to 85 threads the bilayer; that stretch reads GLLRVFSIVIPFLYVGTLIS. The short motif at 81 to 85 is the GXXXX[G/A/S] element; that stretch reads GTLIS. Residues 86–107 are Mitochondrial intermembrane-facing; sequence KNFAALLEEHDIFVPEDDDDDD.

It belongs to the SMDT1/EMRE family. Component of the uniplex complex, composed of MCU, EMRE/SMDT1, MICU1 and MICU2 (or MICU3) in a 4:4:1:1 stoichiometry. The number of EMRE/SMDT1 molecules is hovewer variable, ranging from 1 to 4 copies per uniplex complex, leading to uniplex complexes with distinct gatekeeping profiles. Interacts (via its C-terminal poly-Asp tail) with MCUR1; the interaction is direct. Unprocessed form interacts (via transit peptide) with MAIP1. In terms of processing, undergoes proteolytic degradation in neurons: degraded by AFG3L2 and SPG7 before SMDT1/EMRE assembly with the uniporter complex, limiting the availability of SMDT1/EMRE for MCU assembly and promoting efficient assembly of gatekeeper subunits with MCU. Widely expressed.

The protein localises to the mitochondrion inner membrane. Functionally, essential regulatory subunit of the mitochondrial calcium uniporter complex (uniplex), a complex that mediates calcium uptake into mitochondria. Required to bridge the calcium-sensing proteins MICU1 with the calcium-conducting subunit MCU. Acts by mediating activation of MCU and retention of MICU1 to the MCU pore, in order to ensure tight regulation of the uniplex complex and appropriate responses to intracellular calcium signaling. This is Essential MCU regulator, mitochondrial from Mus musculus (Mouse).